Reading from the N-terminus, the 137-residue chain is BolA-like protein 1 (137 aa).

A Phosphoserine modification is found at serine 81. The tract at residues 115–137 is disordered; that stretch reads RENPQLDISPPCLGGSKKTRGTS.

The protein belongs to the BolA/IbaG family. As to quaternary structure, interacts with GLRX5.

Its subcellular location is the mitochondrion. Functionally, acts as a mitochondrial iron-sulfur (Fe-S) cluster assembly factor that facilitates (Fe-S) cluster insertion into a subset of mitochondrial proteins. Probably acts together with the monothiol glutaredoxin GLRX5. May protect cells against oxidative stress. The polypeptide is BolA-like protein 1 (Bola1) (Mus musculus (Mouse)).